Consider the following 814-residue polypeptide: Tax1-binding protein 1 homolog (814 aa).

Phosphoserine is present on residues Ser124, Ser138, and Ser225. Residues 144–623 adopt a coiled-coil conformation; sequence TTKAGLLELK…KELTKSLEDQ (480 aa). The tract at residues 320-420 is oligomerization; it reads EEISKLQSCL…ELQLHAVKKD (101 aa). Position 619 is a phosphoserine; by IKKA (Ser619). Phosphoserine is present on Ser632. A Phosphoserine; by IKKA modification is found at Ser693. A disordered region spans residues 701–733; that stretch reads SQPARNLSRPDGLEDPEDSREDENVPIPPDPAN. 2 UBZ1-type zinc fingers span residues 752-778 and 779-805; these read HKKCPLCELMFPPNYDQTKFEEHVESH and WKVCPMCSEQFPPDYDQQGFERHVQTH. Positions 755, 758, 774, 778, 782, 785, 801, and 805 each coordinate Zn(2+).

Homooligomer. Interacts with TNFAIP3. Interacts with STARD13. Interacts with MYO6. Interacts with TOM1; the interaction is indirect and is mediated by MYO6, which acts as a bridge between TOM1 and TAX1BP1. Interacts with MAVS; this interaction induces MAVS polyubiquitination. Interacts with TNIP1. Interacts with TRAF6; this interaction mediates deubiquitination of TRAF6 and inhibition of NF-kappa-B activation. Interacts with RIPK1; this interaction negatively regulates RIPK1 ubiquitination. Interacts with NBR1. Interacts with TBK1. Interacts with RB1CC1. Interacts with SQSTM1. Interacts with AZI2. Interacts with TICAM1 and TRIM32; these interactions target TICAM1 to TAX1BP1-mediated selective autophagic degradation. Post-translationally, phosphorylated in the C-terminal region by CHUK/IKKA leading to NF-kappa-B signaling down-regulation.

It localises to the cytoplasm. It is found in the mitochondrion. The protein localises to the preautophagosomal structure. The protein resides in the cytoplasmic vesicle. Its subcellular location is the autophagosome. In terms of biological role, ubiquitin-binding adapter that participates in inflammatory, antiviral and innate immune processes as well as selective autophagy regulation. Plays a key role in the negative regulation of NF-kappa-B and IRF3 signalings by acting as an adapter for the ubiquitin-editing enzyme A20/TNFAIP3 to bind and inactivate its substrates. Disrupts the interactions between the E3 ubiquitin ligase TRAF3 and TBK1/IKBKE to attenuate 'Lys63'-linked polyubiquitination of TBK1 and thereby IFN-beta production. Also recruits A20/TNFAIP3 to ubiquitinated signaling proteins TRAF6 and RIPK1, leading to their deubiquitination and disruption of IL-1 and TNF-induced NF-kappa-B signaling pathways. Inhibits virus-induced apoptosis by inducing the 'Lys-48'-linked polyubiquitination and degradation of MAVS via recruitment of the E3 ligase ITCH, thereby attenuating MAVS-mediated apoptosis signaling. As a macroautophagy/autophagy receptor, facilitates the xenophagic clearance of pathogenic bacteria such as Salmonella typhimurium and Mycobacterium tuberculosis. Upon NBR1 recruitment to the SQSTM1-ubiquitin condensates, acts as the major recruiter of RB1CC1 to these ubiquitin condensates to promote their autophagic degradation. Mediates the autophagic degradation of other substrates including TICAM1. In Mus musculus (Mouse), this protein is Tax1-binding protein 1 homolog (Tax1bp1).